The primary structure comprises 261 residues: Acetylglutamate kinase (261 aa).

Substrate is bound by residues 48–49 (GG), Arg70, and Asn164.

Belongs to the acetylglutamate kinase family. ArgB subfamily.

It localises to the cytoplasm. The catalysed reaction is N-acetyl-L-glutamate + ATP = N-acetyl-L-glutamyl 5-phosphate + ADP. It participates in amino-acid biosynthesis; L-arginine biosynthesis; N(2)-acetyl-L-ornithine from L-glutamate: step 2/4. Functionally, catalyzes the ATP-dependent phosphorylation of N-acetyl-L-glutamate. This is Acetylglutamate kinase from Roseiflexus sp. (strain RS-1).